Here is a 577-residue protein sequence, read N- to C-terminus: Proline--tRNA ligase (577 aa).

Belongs to the class-II aminoacyl-tRNA synthetase family. ProS type 1 subfamily. In terms of assembly, homodimer.

The protein localises to the cytoplasm. It carries out the reaction tRNA(Pro) + L-proline + ATP = L-prolyl-tRNA(Pro) + AMP + diphosphate. Catalyzes the attachment of proline to tRNA(Pro) in a two-step reaction: proline is first activated by ATP to form Pro-AMP and then transferred to the acceptor end of tRNA(Pro). As ProRS can inadvertently accommodate and process non-cognate amino acids such as alanine and cysteine, to avoid such errors it has two additional distinct editing activities against alanine. One activity is designated as 'pretransfer' editing and involves the tRNA(Pro)-independent hydrolysis of activated Ala-AMP. The other activity is designated 'posttransfer' editing and involves deacylation of mischarged Ala-tRNA(Pro). The misacylated Cys-tRNA(Pro) is not edited by ProRS. This chain is Proline--tRNA ligase, found in Thermotoga maritima (strain ATCC 43589 / DSM 3109 / JCM 10099 / NBRC 100826 / MSB8).